Consider the following 819-residue polypeptide: uncharacterized protein (819 aa).

Ser16 bears the Phosphoserine mark. Disordered regions lie at residues 28-83 and 96-134; these read SNTQ…PPTV and PTFT…ASKI. Positions 36 to 63 form a DNA-binding region, zn(2)-C6 fungal-type; that stretch reads KIRFTENENDLSPERAQKEPVSIPHGRY. Composition is skewed to polar residues over residues 64-77 and 96-118; these read TWST…SHLP and PTFT…NDYI.

Its subcellular location is the nucleus. This is an uncharacterized protein from Schizosaccharomyces pombe (strain 972 / ATCC 24843) (Fission yeast).